The chain runs to 305 residues: Protoheme IX farnesyltransferase (305 aa).

9 helical membrane passes run 31-51 (VMSL…YSVH), 52-72 (PFIA…AGAI), 96-118 (VIES…FFMA), 123-145 (LLAS…IWLK), 151-171 (NIVI…AAVS), 179-199 (IILF…LALF), 225-245 (ILIY…IGMN), 247-267 (FIYL…AGSL), and 281-301 (FAYS…TNTI).

This sequence belongs to the UbiA prenyltransferase family. Protoheme IX farnesyltransferase subfamily.

Its subcellular location is the cell membrane. It carries out the reaction heme b + (2E,6E)-farnesyl diphosphate + H2O = Fe(II)-heme o + diphosphate. It participates in porphyrin-containing compound metabolism; heme O biosynthesis; heme O from protoheme: step 1/1. Functionally, converts heme B (protoheme IX) to heme O by substitution of the vinyl group on carbon 2 of heme B porphyrin ring with a hydroxyethyl farnesyl side group. The chain is Protoheme IX farnesyltransferase from Rickettsia africae (strain ESF-5).